A 485-amino-acid polypeptide reads, in one-letter code: Membrane-bound lytic murein transglycosylase F (485 aa).

The signal sequence occupies residues 1 to 29; the sequence is MFAHTALRQRCAKWLLATGLFLLLGACVE. The interval 30–267 is non-LT domain; the sequence is KPSTLERVKE…RLKDRYYGHV (238 aa). The interval 268–485 is LT domain; sequence DVLGYVGAYT…DKPADKSSPM (218 aa). Residue glutamate 314 is part of the active site. The interval 465 to 485 is disordered; that stretch reads EGNLHVPGVNKDKPADKSSPM. Basic and acidic residues predominate over residues 474 to 485; sequence NKDKPADKSSPM.

This sequence in the N-terminal section; belongs to the bacterial solute-binding protein 3 family. In the C-terminal section; belongs to the transglycosylase Slt family.

The protein resides in the cell outer membrane. It carries out the reaction Exolytic cleavage of the (1-&gt;4)-beta-glycosidic linkage between N-acetylmuramic acid (MurNAc) and N-acetylglucosamine (GlcNAc) residues in peptidoglycan, from either the reducing or the non-reducing ends of the peptidoglycan chains, with concomitant formation of a 1,6-anhydrobond in the MurNAc residue.. Its function is as follows. Murein-degrading enzyme that degrades murein glycan strands and insoluble, high-molecular weight murein sacculi, with the concomitant formation of a 1,6-anhydromuramoyl product. Lytic transglycosylases (LTs) play an integral role in the metabolism of the peptidoglycan (PG) sacculus. Their lytic action creates space within the PG sacculus to allow for its expansion as well as for the insertion of various structures such as secretion systems and flagella. In Pseudomonas putida (strain ATCC 700007 / DSM 6899 / JCM 31910 / BCRC 17059 / LMG 24140 / F1), this protein is Membrane-bound lytic murein transglycosylase F.